A 224-amino-acid chain; its full sequence is UPF0173 metal-dependent hydrolase TK0141 (224 aa).

This sequence belongs to the UPF0173 family.

The polypeptide is UPF0173 metal-dependent hydrolase TK0141 (Thermococcus kodakarensis (strain ATCC BAA-918 / JCM 12380 / KOD1) (Pyrococcus kodakaraensis (strain KOD1))).